The following is a 224-amino-acid chain: Large ribosomal subunit protein uL1 (224 aa).

Belongs to the universal ribosomal protein uL1 family. Part of the 50S ribosomal subunit.

Its function is as follows. Binds directly to 23S rRNA. The L1 stalk is quite mobile in the ribosome, and is involved in E site tRNA release. Protein L1 is also a translational repressor protein, it controls the translation of the L11 operon by binding to its mRNA. In Borrelia recurrentis (strain A1), this protein is Large ribosomal subunit protein uL1.